Here is a 96-residue protein sequence, read N- to C-terminus: Basic blue protein (96 aa).

Residues 1–96 enclose the Phytocyanin domain; the sequence is AVYVVGGSGG…SGMKIAVNAL (96 aa). Positions 39, 79, 84, and 89 each coordinate Cu cation. C52 and C85 are joined by a disulfide.

This chain is Basic blue protein, found in Cucumis sativus (Cucumber).